Reading from the N-terminus, the 577-residue chain is Protein O-linked-mannose beta-1,4-N-acetylglucosaminyltransferase 2 (577 aa).

At 1–4 the chain is on the cytoplasmic side; sequence MNIA. A helical; Signal-anchor for type II membrane protein transmembrane segment spans residues 5–25; it reads AVFNALLVSVLATVLWKYIKL. Residues 26-577 lie on the Lumenal side of the membrane; that stretch reads REHAFMVEEE…PFADVLLCST (552 aa). Residues Asn98, Asn275, Asn335, and Asn540 are each glycosylated (N-linked (GlcNAc...) asparagine). Residues 481–577 form the Fibronectin type-III domain; sequence KVRDARCQAS…PFADVLLCST (97 aa).

The protein belongs to the glycosyltransferase 61 family.

Its subcellular location is the endoplasmic reticulum membrane. It catalyses the reaction 3-O-(alpha-D-mannosyl)-L-threonyl-[protein] + UDP-N-acetyl-alpha-D-glucosamine = 3-O-(N-acetyl-beta-D-glucosaminyl-(1-&gt;4)-alpha-D-mannosyl)-L-threonyl-[protein] + UDP + H(+). It functions in the pathway protein modification; protein glycosylation. Functionally, O-linked mannose beta-1,4-N-acetylglucosaminyltransferase that transfers UDP-N-acetyl-D-glucosamine to the 4-position of the mannose to generate N-acetyl-D-glucosamine-beta-1,4-O-D-mannosylprotein. Involved in the biosynthesis of the phosphorylated O-mannosyl trisaccharide (N-acetylgalactosamine-beta-3-N-acetylglucosamine-beta-4-(phosphate-6-)mannose), a carbohydrate structure present in alpha-dystroglycan (DAG1), which is required for binding laminin G-like domain-containing extracellular proteins with high affinity. This Gallus gallus (Chicken) protein is Protein O-linked-mannose beta-1,4-N-acetylglucosaminyltransferase 2 (POMGNT2).